The primary structure comprises 219 residues: Probable 3-beta-hydroxysteroid-Delta(8),Delta(7)-isomerase (219 aa).

4 helical membrane-spanning segments follow: residues 29–49, 62–82, 119–139, and 181–201; these read ILVP…LISG, LMCW…TFVF, VEGI…YAIA, and FWAY…MIAI. In terms of domain architecture, EXPERA spans 58 to 200; sequence TDRWLMCWWA…SWVVIPTMIA (143 aa).

Belongs to the EBP family.

It is found in the endoplasmic reticulum membrane. The enzyme catalyses lathosterol = 5alpha-cholest-8-en-3beta-ol. It functions in the pathway steroid biosynthesis; sterol biosynthesis. Functionally, catalyzes the conversion of Delta(8)-sterols to their corresponding Delta(7)-isomers. The sequence is that of Probable 3-beta-hydroxysteroid-Delta(8),Delta(7)-isomerase from Oryza sativa subsp. japonica (Rice).